The chain runs to 383 residues: Queuine tRNA-ribosyltransferase (383 aa).

Asp90 functions as the Proton acceptor in the catalytic mechanism. Substrate-binding positions include 90–94 (DSGGF), Asp144, Gln193, and Gly227. Residues 258 to 264 (GVGTPED) are RNA binding. Asp277 functions as the Nucleophile in the catalytic mechanism. The segment at 282 to 286 (TRNAR) is RNA binding; important for wobble base 34 recognition. Zn(2+)-binding residues include Cys315, Cys317, Cys320, and His346.

It belongs to the queuine tRNA-ribosyltransferase family. In terms of assembly, homodimer. Within each dimer, one monomer is responsible for RNA recognition and catalysis, while the other monomer binds to the replacement base PreQ1. It depends on Zn(2+) as a cofactor.

It catalyses the reaction 7-aminomethyl-7-carbaguanine + guanosine(34) in tRNA = 7-aminomethyl-7-carbaguanosine(34) in tRNA + guanine. It functions in the pathway tRNA modification; tRNA-queuosine biosynthesis. Functionally, catalyzes the base-exchange of a guanine (G) residue with the queuine precursor 7-aminomethyl-7-deazaguanine (PreQ1) at position 34 (anticodon wobble position) in tRNAs with GU(N) anticodons (tRNA-Asp, -Asn, -His and -Tyr). Catalysis occurs through a double-displacement mechanism. The nucleophile active site attacks the C1' of nucleotide 34 to detach the guanine base from the RNA, forming a covalent enzyme-RNA intermediate. The proton acceptor active site deprotonates the incoming PreQ1, allowing a nucleophilic attack on the C1' of the ribose to form the product. After dissociation, two additional enzymatic reactions on the tRNA convert PreQ1 to queuine (Q), resulting in the hypermodified nucleoside queuosine (7-(((4,5-cis-dihydroxy-2-cyclopenten-1-yl)amino)methyl)-7-deazaguanosine). The polypeptide is Queuine tRNA-ribosyltransferase (Ralstonia nicotianae (strain ATCC BAA-1114 / GMI1000) (Ralstonia solanacearum)).